We begin with the raw amino-acid sequence, 782 residues long: Coiled-coil alpha-helical rod protein 1 (782 aa).

Basic and acidic residues-rich tracts occupy residues 62-74 (ERDVSSDRQEPGR) and 208-218 (ETRRAGEAKEL). 2 disordered regions span residues 62 to 82 (ERDVSSDRQEPGRRGRSWGLE) and 191 to 218 (SSLTSKAEGLEKSLSSLETRRAGEAKEL). 3 coiled-coil regions span residues 82–314 (EGSQ…ELTR), 344–435 (LMVQ…VVNA), and 498–691 (VADV…QQEG).

The protein localises to the cytoplasm. Its subcellular location is the nucleus. Its function is as follows. May be a regulator of keratinocyte proliferation or differentiation. In Pongo pygmaeus (Bornean orangutan), this protein is Coiled-coil alpha-helical rod protein 1 (CCHCR1).